Consider the following 681-residue polypeptide: Cell cycle checkpoint protein RAD17 (681 aa).

The RAD1-binding motif signature appears at 17-25; that stretch reads DWVDPSFDD. The tract at residues 42–61 is disordered; sequence VNNSSHRRKNGPSTLESSRF. Residue Thr-55 is modified to Phosphothreonine. Phosphoserine is present on residues Ser-71 and Ser-86. 137–144 lines the ATP pocket; it reads GPPGCGKT. Disordered regions lie at residues 344 to 377 and 606 to 681; these read SSKGENNLRPRKKGMSLKSDAVLSKSKRRKKPDR and HGMI…SDGT. Position 359 is a phosphoserine (Ser-359). Positions 432–681 are interaction with MCM7; the sequence is LVEPEEVVEM…IIEDYESDGT (250 aa). The segment covering 631–662 has biased composition (polar residues); the sequence is EPTQATVPETWSLPLSQNSASELPASQPQPFS. Position 633 is a phosphothreonine; by ATM (Thr-633). Phosphoserine; by ATR and ATM is present on residues Ser-646 and Ser-656. The segment covering 666 to 681 has biased composition (acidic residues); that stretch reads DMEENIIIEDYESDGT.

The protein belongs to the rad17/RAD24 family. Part of a DNA-binding complex containing RFC2, RFC3, RFC4 and RFC5. Interacts with RAD1 and RAD9 within the 9-1-1 (RAD1-RAD9-HUS1) complex. Interacts with RAD9B, POLE, SNU13 and MCM7. DNA damage promotes interaction with ATR or ATM and disrupts interaction with the 9-1-1 (RAD1-RAD9-HUS1) complex. Interacts (when phosphorylated) with NBN; promoting recruitment of the MRN complex to DNA damage sites. In terms of processing, phosphorylation on Ser-646 and Ser-656 is cell cycle-regulated, enhanced by genotoxic stress, and required for activation of checkpoint signaling. Phosphorylation is mediated by ATR upon UV or replication arrest, whereas it may be mediated both by ATR and ATM upon ionizing radiation. Phosphorylation on both sites is required for interaction with RAD1 but dispensable for interaction with RFC3 or RFC4. Phosphorylation at Thr-633 by ATM in response to DNA damage promotes interaction with NBN and recruitment of the MRN complex to DNA damage sites. In terms of tissue distribution, overexpressed in various cancer cell lines and in colon carcinoma (at protein level). Isoform 2 and isoform 3 are the most abundant isoforms in non irradiated cells (at protein level). Ubiquitous at low levels. Highly expressed in testis, where it is expressed within the germinal epithelium of the seminiferous tubuli. Weakly expressed in seminomas (testicular tumors).

The protein localises to the nucleus. Its subcellular location is the chromosome. Essential for sustained cell growth, maintenance of chromosomal stability, and ATR-dependent checkpoint activation upon DNA damage. Has a weak ATPase activity required for binding to chromatin. Participates in the recruitment of the 9-1-1 (RAD1-RAD9-HUS1) complex and RHNO1 onto chromatin, and in CHEK1 activation. Involved in homologous recombination by mediating recruitment of the MRN complex to DNA damage sites. May also serve as a sensor of DNA replication progression. This is Cell cycle checkpoint protein RAD17 from Homo sapiens (Human).